A 154-amino-acid polypeptide reads, in one-letter code: NADPH-dependent 7-cyano-7-deazaguanine reductase (154 aa).

A compositionally biased stretch (basic and acidic residues) spans 1-11 (MAKKPVKDLKQ). Residues 1 to 31 (MAKKPVKDLKQLGHATPVPASPEEATLERVP) are disordered. Cys-52 functions as the Thioimide intermediate in the catalytic mechanism. Catalysis depends on Asp-59, which acts as the Proton donor. Residues 74–76 (IES) and 93–94 (HE) contribute to the substrate site.

It belongs to the GTP cyclohydrolase I family. QueF type 1 subfamily.

It is found in the cytoplasm. It carries out the reaction 7-aminomethyl-7-carbaguanine + 2 NADP(+) = 7-cyano-7-deazaguanine + 2 NADPH + 3 H(+). The protein operates within tRNA modification; tRNA-queuosine biosynthesis. Its function is as follows. Catalyzes the NADPH-dependent reduction of 7-cyano-7-deazaguanine (preQ0) to 7-aminomethyl-7-deazaguanine (preQ1). This chain is NADPH-dependent 7-cyano-7-deazaguanine reductase, found in Parvibaculum lavamentivorans (strain DS-1 / DSM 13023 / NCIMB 13966).